Here is a 402-residue protein sequence, read N- to C-terminus: Hyaluronan and proteoglycan link protein 4 (402 aa).

A signal peptide spans 1-29; it reads MVCARAALGPGALWAAAWGVLLLTAPAGA. The Ig-like C2-type domain maps to 46–161; the sequence is SVVVQTAPGQ…DAGMVKLDLE (116 aa). Cystine bridges form between C68/C143, C185/C266, C209/C230, C293/C363, and C318/C339. The N-linked (GlcNAc...) asparagine glycan is linked to N132. 2 Link domains span residues 163–268 and 273–365; these read VVFP…FCFT and GRVF…YCYR.

It belongs to the HAPLN family. As to expression, expressed predominantly in brain.

It localises to the secreted. It is found in the extracellular space. The protein localises to the extracellular matrix. Its function is as follows. Essential for the proper localization of brevican (BCAN), mainly as a perineuronal nets (PNNs)-type deposition in the brainstem and cerebellum thereby playing a key role in the formation and structural organization of PNNs. Contributes to the formation and transmission of inhibitory GABAergic synapses between Purkinje cells and deep cerebellar nuclei neurons. The sequence is that of Hyaluronan and proteoglycan link protein 4 (HAPLN4) from Homo sapiens (Human).